The following is a 226-amino-acid chain: Prolactin (226 aa).

Residues 1-29 form the signal peptide; it reads MNSQGSAQKAGTLLLLLISNLLFCQNVQP. A disulfide bridge connects residues Cys-33 and Cys-38. Ser-53 and Ser-117 each carry phosphoserine. Disulfide bonds link Cys-85–Cys-201 and Cys-218–Cys-226.

It belongs to the somatotropin/prolactin family. In terms of assembly, interacts with PRLR.

The protein resides in the secreted. In terms of biological role, prolactin acts primarily on the mammary gland by promoting lactation. The polypeptide is Prolactin (Prl) (Mus musculus (Mouse)).